We begin with the raw amino-acid sequence, 730 residues long: Catalase R (730 aa).

Residue H105 is part of the active site. Y392 contributes to the heme binding site. The disordered stretch occupies residues 403 to 433 (PNFEQIPVNRPRKPVHNNNRDGFGQQQIPTN).

It belongs to the catalase family. Heme serves as cofactor.

It carries out the reaction 2 H2O2 = O2 + 2 H2O. In terms of biological role, occurs in almost all aerobically respiring organisms and serves to protect cells from the toxic effects of hydrogen peroxide. In Aspergillus niger, this protein is Catalase R (catR).